The primary structure comprises 108 residues: Ig kappa chain V-V region MOPC 173 (108 aa).

The segment at 1–23 (DIQMTQTTSSLSASLGDRVTISC) is framework-1. C23 and C88 form a disulfide bridge. Residues 24–34 (SASQSIGNYLB) form a complementarity-determining-1 region. A framework-2 region spans residues 35 to 49 (WYQQKPDGTVKLLIY). The interval 50 to 56 (YTSSLHS) is complementarity-determining-2. A framework-3 region spans residues 57 to 88 (GVPSRFSGSGSGTDYSLTISBLZPZBIATYYC). A complementarity-determining-3 region spans residues 89-97 (QQYSKLPRT). Residues 98-108 (FGGGTKLEIKR) are framework-4.

This chain is Ig kappa chain V-V region MOPC 173, found in Mus musculus (Mouse).